Here is a 627-residue protein sequence, read N- to C-terminus: MSLDISKYPILALANTPDELRSLPKESLPALCDELRAYLLKSVSKSSGHLASGLGVVELTVALHYVYNTPFDQLIWDVGHQAYPHKILTGRREKLSTIRQKDGLHPFPWRDESEYDVLSVGHSSTSISAALGLAICAEKEQANRKVISVIGDGAITAGMAFEALNHAGDIHPDMLVVLNDNEMSISENVGALNNQLARVLSGSLYTSIREGGKKVLSGTPTIKELLKRTEEHIKGMVIPGTMFEELGFNYIGPVDGHDVNELVRTLKNMRNLKGPQFLHIMTKKGKGYEPAEKDPISYHGVPKFDPSNHSLPKSSGGKPTFSNIFGDFLCDMAKDDDKLMAITPAMREGSGMVRFSKEFPGQYFDTAIAEQHAVTLASGMAIAGYNPIVAIYSTFLQRGYDQLIHDVAIMNLPVMFAIDRAGLVGADGQTHQGAFDISFMRCIPNMVIMTPSDENECRQMLYTGHKHTGPSAVRYPRGSATGIEVNKEMQALEIGKGRLIRETKITEKGERVAILNFGTFLSNSVEAAEKLDATVADMRFAKPLDETLLCELVTSHDVLVTIEENAISGGAGSGVIEFLMKNRLIKPVLQLGLPDQFIAQGTQEEMHAELMLDATGIEKQIRDYLDL.

Residues His-80 and 121–123 contribute to the thiamine diphosphate site; that span reads GHS. Asp-152 provides a ligand contact to Mg(2+). Thiamine diphosphate contacts are provided by residues 153–154, Asn-181, Tyr-288, and Glu-370; that span reads GA. Asn-181 provides a ligand contact to Mg(2+).

This sequence belongs to the transketolase family. DXPS subfamily. Homodimer. Requires Mg(2+) as cofactor. Thiamine diphosphate is required as a cofactor.

The catalysed reaction is D-glyceraldehyde 3-phosphate + pyruvate + H(+) = 1-deoxy-D-xylulose 5-phosphate + CO2. Its pathway is metabolic intermediate biosynthesis; 1-deoxy-D-xylulose 5-phosphate biosynthesis; 1-deoxy-D-xylulose 5-phosphate from D-glyceraldehyde 3-phosphate and pyruvate: step 1/1. In terms of biological role, catalyzes the acyloin condensation reaction between C atoms 2 and 3 of pyruvate and glyceraldehyde 3-phosphate to yield 1-deoxy-D-xylulose-5-phosphate (DXP). The protein is 1-deoxy-D-xylulose-5-phosphate synthase of Aliivibrio salmonicida (strain LFI1238) (Vibrio salmonicida (strain LFI1238)).